Here is an 82-residue protein sequence, read N- to C-terminus: Protein ImpC (82 aa).

The protein belongs to the DinI family.

Its function is as follows. The imp operon is involved in UV protection and mutation, however the ImpC protein is not essential for these functions. The sequence is that of Protein ImpC (impC) from Salmonella typhimurium.